Consider the following 1201-residue polypeptide: Zinc finger protein sdc-1 (1201 aa).

C2H2-type zinc fingers lie at residues leucine 117 to histidine 139, tyrosine 145 to cysteine 168, serine 233 to histidine 254, tyrosine 268 to histidine 290, isoleucine 486 to histidine 513, tyrosine 521 to cysteine 543, and valine 652 to histidine 674. The interval lysine 1164–arginine 1201 is disordered. Residues asparagine 1167 to isoleucine 1176 are compositionally biased toward basic and acidic residues.

In terms of assembly, component of the SDC complex, which consists of sdc-1, sdc-2 and sdc-3. Within the complex, interacts with sdc-2 and sdc-3.

The protein resides in the nucleus. It localises to the chromosome. In terms of biological role, embryonic transcription factor regulating downstream genes involved specifically in the sex determination and dosage compensation pathways, or regulating other genes involved in the coordinate control of both processes. Component of the SDC complex that functions in sex determination and in X chromosome dosage compensation specifically in hermaphrodite (XX) animals. Involved in the recruitment of the condensin I-like dosage compensation complex to the male sex-determining autosomal gene her-1, thereby contributing to its repression and initiating hermaphrodite sexual development. Similarly, might contribute to X-linked gene repression through recruitment of the dosage compensation complex to the X chromosomes in hermaphrodites. Seems to be involved in the depletion of histone H4 lysine 16 acetylation (H4K16ac) on dosage compensated X chromosomes. Plays a role in developmental rate and body fat regulation downstream of the TOR complex 2 pathway. The sequence is that of Zinc finger protein sdc-1 (sdc-1) from Caenorhabditis elegans.